Consider the following 210-residue polypeptide: Thymidylate kinase (210 aa).

10–17 (GPEGAGKS) lines the ATP pocket.

This sequence belongs to the thymidylate kinase family.

The catalysed reaction is dTMP + ATP = dTDP + ADP. In terms of biological role, phosphorylation of dTMP to form dTDP in both de novo and salvage pathways of dTTP synthesis. The protein is Thymidylate kinase of Pseudomonas paraeruginosa (strain DSM 24068 / PA7) (Pseudomonas aeruginosa (strain PA7)).